Here is a 260-residue protein sequence, read N- to C-terminus: Adenosylcobinamide-GDP ribazoletransferase (260 aa).

The next 6 helical transmembrane spans lie at 43–63 (LVGT…QFIF), 64–84 (PASV…GGFH), 117–137 (GSLA…ELAL), 143–163 (VAGG…SIIF), 197–217 (VICL…TLFV), and 237–257 (TLGA…LLLW).

This sequence belongs to the CobS family. The cofactor is Mg(2+).

Its subcellular location is the cell inner membrane. The enzyme catalyses alpha-ribazole + adenosylcob(III)inamide-GDP = adenosylcob(III)alamin + GMP + H(+). The catalysed reaction is alpha-ribazole 5'-phosphate + adenosylcob(III)inamide-GDP = adenosylcob(III)alamin 5'-phosphate + GMP + H(+). Its pathway is cofactor biosynthesis; adenosylcobalamin biosynthesis; adenosylcobalamin from cob(II)yrinate a,c-diamide: step 7/7. In terms of biological role, joins adenosylcobinamide-GDP and alpha-ribazole to generate adenosylcobalamin (Ado-cobalamin). Also synthesizes adenosylcobalamin 5'-phosphate from adenosylcobinamide-GDP and alpha-ribazole 5'-phosphate. This Shewanella amazonensis (strain ATCC BAA-1098 / SB2B) protein is Adenosylcobinamide-GDP ribazoletransferase.